Here is a 413-residue protein sequence, read N- to C-terminus: Serine hydroxymethyltransferase (413 aa).

Residues L120 and 124 to 126 each bind (6S)-5,6,7,8-tetrahydrofolate; that span reads GHL. K228 carries the post-translational modification N6-(pyridoxal phosphate)lysine.

Belongs to the SHMT family. Homodimer. It depends on pyridoxal 5'-phosphate as a cofactor.

It is found in the cytoplasm. The catalysed reaction is (6R)-5,10-methylene-5,6,7,8-tetrahydrofolate + glycine + H2O = (6S)-5,6,7,8-tetrahydrofolate + L-serine. It functions in the pathway one-carbon metabolism; tetrahydrofolate interconversion. Its pathway is amino-acid biosynthesis; glycine biosynthesis; glycine from L-serine: step 1/1. Catalyzes the reversible interconversion of serine and glycine with tetrahydrofolate (THF) serving as the one-carbon carrier. This reaction serves as the major source of one-carbon groups required for the biosynthesis of purines, thymidylate, methionine, and other important biomolecules. Also exhibits THF-independent aldolase activity toward beta-hydroxyamino acids, producing glycine and aldehydes, via a retro-aldol mechanism. This chain is Serine hydroxymethyltransferase, found in Agathobacter rectalis (strain ATCC 33656 / DSM 3377 / JCM 17463 / KCTC 5835 / VPI 0990) (Eubacterium rectale).